The primary structure comprises 483 residues: Glutamyl-tRNA(Gln) amidotransferase subunit A (483 aa).

Residues lysine 76 and serine 151 each act as charge relay system in the active site. The Acyl-ester intermediate role is filled by serine 175.

This sequence belongs to the amidase family. GatA subfamily. As to quaternary structure, heterotrimer of A, B and C subunits.

The catalysed reaction is L-glutamyl-tRNA(Gln) + L-glutamine + ATP + H2O = L-glutaminyl-tRNA(Gln) + L-glutamate + ADP + phosphate + H(+). Allows the formation of correctly charged Gln-tRNA(Gln) through the transamidation of misacylated Glu-tRNA(Gln) in organisms which lack glutaminyl-tRNA synthetase. The reaction takes place in the presence of glutamine and ATP through an activated gamma-phospho-Glu-tRNA(Gln). In Pseudomonas fluorescens (strain ATCC BAA-477 / NRRL B-23932 / Pf-5), this protein is Glutamyl-tRNA(Gln) amidotransferase subunit A.